The primary structure comprises 398 residues: Stimulator of interferon genes protein (398 aa).

Topologically, residues 1-16 (MSVMGEDALVPRARSR) are cytoplasmic. The chain crosses the membrane as a helical span at residues 17–37 (LPVMCAAGLGFLTLAVAWLLD). Residues 38-44 (SDKFSER) lie on the Lumenal side of the membrane. Residues 45 to 65 (AGIIAFGLMLERFIYCICLLA) form a helical membrane-spanning segment. Over 66–91 (EELLFHSRQRYHGRMSEIFRACFRGS) the chain is Cytoplasmic. Residues 92 to 112 (GILGMCAIFLMLMLGGVSFSV) form a helical membrane-spanning segment. Residues 113–120 (KQWSHFNL) lie on the Lumenal side of the membrane. Residues 121–141 (MCAGYMLLNSLGVLGPAPVEI) traverse the membrane as a helical segment. Residues 142 to 398 (SEICEAKKMN…FNPSSAMKQN (257 aa)) are Cytoplasmic-facing. Positions 150–331 (MNVAHGLAWS…QNLKQQDGEI (182 aa)) are cyclic dinucleotide-binding domain (CBD). Positions 159, 164, 230, and 254 each coordinate 2',3'-cGAMP. Residues S159, Y164, 230–233 (RSYT), and T254 contribute to the 3',3'-c-di-GMP site. The tract at residues 375–398 (PQSLRSEPVETTDYFNPSSAMKQN) is disordered. Polar residues predominate over residues 387–398 (DYFNPSSAMKQN).

The protein belongs to the STING family. As to quaternary structure, homodimer; forms a homodimer in absence of cyclic nucleotide (c-di-GMP or cGAMP). Homotetramer; in presence of cyclic nucleotide (c-di-GMP or cGAMP), forms tetramers and higher-order oligomers through side-by-side packing. Interacts (when phosphorylated) with irf3; following activation and phosphorylation by tbk1, recruits irf3. In terms of processing, phosphorylation by TBK1 leads to activation and production of IFN-beta. Following cyclic nucleotide (c-di-GMP or cGAMP)-binding, activation and translocation from the endoplasmic reticulum, STING1 is phosphorylated by tbk1, leading to recruitment of the transcription factor irf3 to induce type-I interferons and other cytokines.

It is found in the endoplasmic reticulum membrane. Its subcellular location is the cytoplasm. The protein localises to the perinuclear region. It localises to the endoplasmic reticulum-Golgi intermediate compartment membrane. The protein resides in the golgi apparatus membrane. It is found in the cytoplasmic vesicle. Its subcellular location is the autophagosome membrane. It catalyses the reaction H(+)(in) = H(+)(out). Its function is as follows. Facilitator of innate immune signaling that acts as a sensor of cytosolic DNA from bacteria and viruses and promotes the production of type I interferon (IFN-alpha and IFN-beta). Innate immune response is triggered in response to non-CpG double-stranded DNA from viruses and bacteria delivered to the cytoplasm. Acts by binding cyclic dinucleotides: recognizes and binds cyclic di-GMP (c-di-GMP), a second messenger produced by bacteria, and cyclic GMP-AMP (cGAMP), a messenger produced by CGAS in response to DNA virus in the cytosol. Upon binding of c-di-GMP or cGAMP, STING1 oligomerizes and is able to activate both NF-kappa-B and irf3 transcription pathways to induce expression of type I interferon and exert a potent anti-viral state. Exhibits 2',3' phosphodiester linkage-specific ligand recognition: can bind both 2'-3' linked cGAMP and 3'-3' linked cGAMP but is preferentially activated by 2'-3' linked cGAMP. In addition to promote the production of type I interferons, plays a direct role in autophagy. Following cGAMP-binding, STING1 buds from the endoplasmic reticulum into COPII vesicles, which then form the endoplasmic reticulum-Golgi intermediate compartment (ERGIC). The ERGIC serves as the membrane source for LC3 lipidation, leading to formation of autophagosomes that target cytosolic DNA or DNA viruses for degradation by the lysosome. Promotes autophagy by acting as a proton channel that directs proton efflux from the Golgi to facilitate LC3 lipidation. The autophagy- and interferon-inducing activities can be uncoupled and autophagy induction is independent of TBK1 phosphorylation. The sequence is that of Stimulator of interferon genes protein from Danio rerio (Zebrafish).